The sequence spans 315 residues: Transaldolase (315 aa).

Lys-131 acts as the Schiff-base intermediate with substrate in catalysis.

The protein belongs to the transaldolase family. Type 1 subfamily. In terms of assembly, homodimer.

The protein resides in the cytoplasm. The enzyme catalyses D-sedoheptulose 7-phosphate + D-glyceraldehyde 3-phosphate = D-erythrose 4-phosphate + beta-D-fructose 6-phosphate. The protein operates within carbohydrate degradation; pentose phosphate pathway; D-glyceraldehyde 3-phosphate and beta-D-fructose 6-phosphate from D-ribose 5-phosphate and D-xylulose 5-phosphate (non-oxidative stage): step 2/3. Transaldolase is important for the balance of metabolites in the pentose-phosphate pathway. The polypeptide is Transaldolase (Actinobacillus pleuropneumoniae serotype 7 (strain AP76)).